Here is a 342-residue protein sequence, read N- to C-terminus: Uroporphyrinogen decarboxylase (342 aa).

Substrate is bound by residues 26–30 (RQAGR), Asp-76, Tyr-150, Ser-205, and His-321.

This sequence belongs to the uroporphyrinogen decarboxylase family. In terms of assembly, homodimer.

The protein localises to the cytoplasm. It catalyses the reaction uroporphyrinogen III + 4 H(+) = coproporphyrinogen III + 4 CO2. The protein operates within porphyrin-containing compound metabolism; protoporphyrin-IX biosynthesis; coproporphyrinogen-III from 5-aminolevulinate: step 4/4. Its function is as follows. Catalyzes the decarboxylation of four acetate groups of uroporphyrinogen-III to yield coproporphyrinogen-III. This Sphingopyxis alaskensis (strain DSM 13593 / LMG 18877 / RB2256) (Sphingomonas alaskensis) protein is Uroporphyrinogen decarboxylase.